Reading from the N-terminus, the 160-residue chain is Ribosomal RNA large subunit methyltransferase H (160 aa).

S-adenosyl-L-methionine-binding positions include Leu76, Gly108, and 127-132; that span reads LGKMTW.

This sequence belongs to the RNA methyltransferase RlmH family. Homodimer.

The protein resides in the cytoplasm. It carries out the reaction pseudouridine(1915) in 23S rRNA + S-adenosyl-L-methionine = N(3)-methylpseudouridine(1915) in 23S rRNA + S-adenosyl-L-homocysteine + H(+). In terms of biological role, specifically methylates the pseudouridine at position 1915 (m3Psi1915) in 23S rRNA. This Rhizobium etli (strain CIAT 652) protein is Ribosomal RNA large subunit methyltransferase H.